A 563-amino-acid polypeptide reads, in one-letter code: IQCJ-SCHIP1 readthrough transcript protein (563 aa).

The 21-residue stretch at 47-67 (ESKVKIIQRAWREYLQRQEPL) folds into the IQ domain. Disordered regions lie at residues 63–150 (RQEP…VSAL), 164–295 (VIDE…EPPV), 312–336 (FREQEVRNQGQARTNSTSAQKNERE), and 384–430 (SGSD…SLDD). Positions 76 to 87 (SVSSEKLSSSVS) are enriched in low complexity. A compositionally biased stretch (polar residues) spans 88-97 (MNTFSDSSTP). Over residues 108 to 143 (SDAGSSSSSSRASSQSNSTKVTPCSECKSSSSPGGS) the composition is skewed to low complexity. The segment covering 168-182 (WAPEEDGEEEEEEDE) has biased composition (acidic residues). Composition is skewed to basic and acidic residues over residues 183–199 (RDQRGYRDDRSPAREPG) and 229–238 (HQHDPQDLRH). The residue at position 193 (Ser-193) is a Phosphoserine. A compositionally biased stretch (polar residues) spans 318–331 (RNQGQARTNSTSAQ). Over residues 385–399 (GSDKDSDADDSKTET) the composition is skewed to basic and acidic residues. Positions 400–411 (SLDTPLSPMSKQ) are enriched in polar residues. The interval 419–563 (DTTEEESESL…KHMAEKMPAK (145 aa)) is required for interaction with ankyrins. Residues 420-430 (TTEEESESLDD) are compositionally biased toward acidic residues. Positions 500 to 534 (IGQLQVIVNDLHSQIESLNEELVQLLLIRDELHTE) form a coiled coil.

Homooligomer (via coiled coil domain). Interacts (via IQ domain) with calmodulin; the interaction is direct and lost in presence of calcium. Interacts with ANK3 (via ANK repeats); required for localization at axon initial segments (AIS) and nodes of Ranvier. Interacts with SPTBN4. Interacts with KCNQ2 and KCNQ3. In terms of tissue distribution, highly expressed in brain and to a lower extent in heart and kidney.

The protein resides in the cell projection. It localises to the axon. Its subcellular location is the cytoplasm. Its function is as follows. May play a role in action potential conduction in myelinated cells through the organization of molecular complexes at nodes of Ranvier and axon initial segments. May also play a role in axon outgrowth and guidance. This chain is IQCJ-SCHIP1 readthrough transcript protein, found in Homo sapiens (Human).